The sequence spans 616 residues: 1-deoxy-D-xylulose-5-phosphate synthase (616 aa).

Thiamine diphosphate-binding positions include His74 and 115-117; that span reads GHS. Asp146 is a binding site for Mg(2+). Thiamine diphosphate contacts are provided by residues 147–148, Asn175, Tyr282, and Glu365; that span reads GA. Position 175 (Asn175) interacts with Mg(2+).

Belongs to the transketolase family. DXPS subfamily. As to quaternary structure, homodimer. Mg(2+) serves as cofactor. The cofactor is thiamine diphosphate.

The catalysed reaction is D-glyceraldehyde 3-phosphate + pyruvate + H(+) = 1-deoxy-D-xylulose 5-phosphate + CO2. It participates in metabolic intermediate biosynthesis; 1-deoxy-D-xylulose 5-phosphate biosynthesis; 1-deoxy-D-xylulose 5-phosphate from D-glyceraldehyde 3-phosphate and pyruvate: step 1/1. Catalyzes the acyloin condensation reaction between C atoms 2 and 3 of pyruvate and glyceraldehyde 3-phosphate to yield 1-deoxy-D-xylulose-5-phosphate (DXP). This is 1-deoxy-D-xylulose-5-phosphate synthase from Chromobacterium violaceum (strain ATCC 12472 / DSM 30191 / JCM 1249 / CCUG 213 / NBRC 12614 / NCIMB 9131 / NCTC 9757 / MK).